Reading from the N-terminus, the 172-residue chain is Cell division protein SepF (172 aa).

Residues 18–73 are disordered; sequence RRYDEEDLPDEELTTEVYSDDGYEPSSEVTQLHHHDSNEQHARGHKAVQHRRRSEL. Acidic residues predominate over residues 22–40; it reads EEDLPDEELTTEVYSDDGY. The segment covering 48 to 59 has biased composition (basic and acidic residues); that stretch reads QLHHHDSNEQHA. The span at 60-70 shows a compositional bias: basic residues; sequence RGHKAVQHRRR.

Belongs to the SepF family. Homodimer. Interacts with FtsZ.

It is found in the cytoplasm. In terms of biological role, cell division protein that is part of the divisome complex and is recruited early to the Z-ring. Probably stimulates Z-ring formation, perhaps through the cross-linking of FtsZ protofilaments. Its function overlaps with FtsA. The chain is Cell division protein SepF from Cutibacterium acnes (strain DSM 16379 / KPA171202) (Propionibacterium acnes).